A 338-amino-acid chain; its full sequence is Phenylalanine--tRNA ligase alpha subunit (338 aa).

Glu253 contacts Mg(2+).

Belongs to the class-II aminoacyl-tRNA synthetase family. Phe-tRNA synthetase alpha subunit type 1 subfamily. In terms of assembly, tetramer of two alpha and two beta subunits. Mg(2+) serves as cofactor.

Its subcellular location is the cytoplasm. It catalyses the reaction tRNA(Phe) + L-phenylalanine + ATP = L-phenylalanyl-tRNA(Phe) + AMP + diphosphate + H(+). The sequence is that of Phenylalanine--tRNA ligase alpha subunit from Geotalea daltonii (strain DSM 22248 / JCM 15807 / FRC-32) (Geobacter daltonii).